Here is a 311-residue protein sequence, read N- to C-terminus: Chemotaxis protein CheV3 (311 aa).

A CheW-like domain is found at 13–164; it reads EIELVDFRIY…LESILDDLKL (152 aa). One can recognise a Response regulatory domain in the interval 182-308; it reads EVLFLDDSKT…FTEEISKILD (127 aa). Asp241 is modified (4-aspartylphosphate).

In terms of biological role, plays a role in chemotaxis signal transduction system in order to colonize the host stomach. May act as a phosphate sink to control the flow of phosphate to CheAY. This chain is Chemotaxis protein CheV3, found in Helicobacter pylori (strain ATCC 700392 / 26695) (Campylobacter pylori).